The following is a 28-amino-acid chain: Ranatuerin-2AVa (28 aa).

Cysteines 23 and 28 form a disulfide.

In terms of tissue distribution, expressed by the skin glands.

Its subcellular location is the secreted. Functionally, has antibacterial activity against the Gram positive bacterium L.lactis. The chain is Ranatuerin-2AVa from Rana arvalis (Moor frog).